Reading from the N-terminus, the 475-residue chain is MDYELVVGLEVHCQLNTVTKAFCGCSAQFGKAANTNVCPVCLALPGALPVLNRQVVEDAVKIGLALDCRIAPHSVLARKNYFYPDLPKGYQISQFEEPICSDGSIDVELDGVNRTIHLIRIHIEEDAGKSIHDIGDDTFIDLNRSGVPLLEIVSYPDIRSAKEASAYLQKLRQIVKYLGISDGNMEEGSLRCDANVSLRPVGATEYGTRTEIKNMNSFKNVEKAIEYEALRHREILENGGVIIQETRLWDADKGETRSMRGKEFAHDYRYFPDPDLVPVLVDEAMIERLKLELPEFPEMRARRFAADYGIPTYDAGVLTVERELADYFEETVKLSGDAKTSSNWVMGEVMRTLKEKYLDIAEFSIRPARLAGLIQLIHNKVISNTIAKQVFEVMLNDEAEPAAIVERDGLAQVSDSGALEAVAQEVIDANPKQLAEYREGKTKLMGFFVGQCMSRMKGKANPQLVNDILLKKLEG.

The protein belongs to the GatB/GatE family. GatB subfamily. In terms of assembly, heterotrimer of A, B and C subunits.

The catalysed reaction is L-glutamyl-tRNA(Gln) + L-glutamine + ATP + H2O = L-glutaminyl-tRNA(Gln) + L-glutamate + ADP + phosphate + H(+). The enzyme catalyses L-aspartyl-tRNA(Asn) + L-glutamine + ATP + H2O = L-asparaginyl-tRNA(Asn) + L-glutamate + ADP + phosphate + 2 H(+). Functionally, allows the formation of correctly charged Asn-tRNA(Asn) or Gln-tRNA(Gln) through the transamidation of misacylated Asp-tRNA(Asn) or Glu-tRNA(Gln) in organisms which lack either or both of asparaginyl-tRNA or glutaminyl-tRNA synthetases. The reaction takes place in the presence of glutamine and ATP through an activated phospho-Asp-tRNA(Asn) or phospho-Glu-tRNA(Gln). This Chlorobium chlorochromatii (strain CaD3) protein is Aspartyl/glutamyl-tRNA(Asn/Gln) amidotransferase subunit B.